Consider the following 50-residue polypeptide: KDRPKKPGLCPPRPQKPCVKECKNDDSCPGQQKCCNYGCKDECRDPIFVG.

The region spanning 3-47 (RPKKPGLCPPRPQKPCVKECKNDDSCPGQQKCCNYGCKDECRDPI) is the WAP domain. Cystine bridges form between cysteine 10-cysteine 35, cysteine 18-cysteine 39, cysteine 22-cysteine 34, and cysteine 28-cysteine 43.

Belongs to the venom waprin family. As to expression, expressed by the venom gland.

The protein resides in the secreted. In terms of biological role, damages membranes of susceptible bacteria. Has antibacterial activity against the Gram-positive bacteria B.megaterium and S.warneri. After a 45-minute treatment with this protein, B.megaterium have no visible pili and are smooth. Has no antibacterial activity against the Gram-positive bacteria B.thuringiensis, S.aureus, S.clavuligerus and B.anthracis, or the Gram-negative bacteria E.coli and A.tumefaciens. Has no hemolytic activity. Does not inhibit the proteinases elastase and cathepsin G. Is not toxic to mice. This chain is Omwaprin-a, found in Oxyuranus microlepidotus (Inland taipan).